Reading from the N-terminus, the 281-residue chain is Elongation factor 1-delta (281 aa).

Ala-2 is modified (N-acetylalanine). N6-acetyllysine is present on Lys-17. Residues Ser-37, Ser-44, Ser-60, Ser-86, and Ser-106 each carry the phosphoserine modification. The tract at residues 80 to 115 (LVVRIASLEVENQSLRGVVQELQQAISKLEARLNVL) is leucine-zipper. Position 107 is an N6-acetyllysine (Lys-107). Lys-117 carries the N6-acetyllysine; alternate modification. N6-succinyllysine; alternate is present on Lys-117. Residues 118-172 (SSPGHRATAPQTQHVSPMRQVEPPAKKPATPAEDDEDDDIDLFGSDNEEEDKEAA) are disordered. Residue Ser-119 is modified to Phosphoserine. A Phosphothreonine modification is found at Thr-129. Ser-133 bears the Phosphoserine mark. Position 147 is a phosphothreonine (Thr-147). Positions 149 to 169 (AEDDEDDDIDLFGSDNEEEDK) are enriched in acidic residues. Ser-162 is modified (phosphoserine; by CK2). The segment at 173-281 (QLREERLRQY…SVDIAAFNKI (109 aa)) is catalytic (GEF).

This sequence belongs to the EF-1-beta/EF-1-delta family. In terms of assembly, EF-1 is composed of 4 subunits: alpha, beta, delta isoform 1, and gamma. Isoform 2 interacts with HSF1 and NFE2L2.

It localises to the nucleus. Functionally, EF-1-beta and EF-1-delta stimulate the exchange of GDP bound to EF-1-alpha to GTP, regenerating EF-1-alpha for another round of transfer of aminoacyl-tRNAs to the ribosome. In terms of biological role, regulates induction of heat-shock-responsive genes through association with heat shock transcription factors and direct DNA-binding at heat shock promoter elements (HSE). This chain is Elongation factor 1-delta (EEF1D), found in Macaca fascicularis (Crab-eating macaque).